A 263-amino-acid polypeptide reads, in one-letter code: Small ribosomal subunit protein uS3 (263 aa).

Residues 39 to 107 (VREYLKKKLK…PVHVNIEEIR (69 aa)) form the KH type-2 domain. The interval 211–263 (GELPPEAATPREEERRPRRAPRGDRPDGGRPGRPGGRGRGPRKADAAPAPEGE) is disordered. Over residues 219–240 (TPREEERRPRRAPRGDRPDGGR) the composition is skewed to basic and acidic residues.

It belongs to the universal ribosomal protein uS3 family. In terms of assembly, part of the 30S ribosomal subunit. Forms a tight complex with proteins S10 and S14.

In terms of biological role, binds the lower part of the 30S subunit head. Binds mRNA in the 70S ribosome, positioning it for translation. In Bordetella petrii (strain ATCC BAA-461 / DSM 12804 / CCUG 43448), this protein is Small ribosomal subunit protein uS3.